A 955-amino-acid chain; its full sequence is Histone deacetylase 6 (955 aa).

Histone deacetylase regions lie at residues 15 to 337 (TLIG…YAPF) and 425 to 749 (METL…VLQN). H146 serves as the catalytic 1. Catalysis depends on H561, which acts as the 2. Positions 815–840 (SIDMADQSSSSGSSSSSTRPSHNLEI) are disordered. Over residues 818 to 831 (MADQSSSSGSSSSS) the composition is skewed to low complexity. Residues 853–951 (ATCPHLKEVK…SAAHESKFGE (99 aa)) form a UBP-type zinc finger. The Zn(2+) site is built by C855, H857, C875, C878, C887, C890, and C895. The segment at 896–898 (GRF) is ubiquitin binding. Positions 902, 906, 912, 925, and 928 each coordinate Zn(2+). Positions 924-931 (WCYPCDSY) are ubiquitin binding.

It belongs to the histone deacetylase family. HD type 2 subfamily. Zn(2+) is required as a cofactor.

Its subcellular location is the nucleus. The enzyme catalyses N(6)-acetyl-L-lysyl-[histone] + H2O = L-lysyl-[histone] + acetate. Functionally, probable histone deacetylase. Histone deacetylases are responsible for the deacetylation of lysine residues on the N-terminal part of the core histones (H2A, H2B, H3 and H4). Histone deacetylation gives a tag for epigenetic repression and plays an important role in transcriptional regulation, cell cycle progression and developmental events. Histone deacetylases act via the formation of large multiprotein complexes. This is Histone deacetylase 6 (hda-6) from Caenorhabditis elegans.